The following is a 194-amino-acid chain: Thiol:disulfide interchange protein CycY (194 aa).

An N-terminal signal peptide occupies residues 1–37 (MSEQSTSANPQRRTFLMVLPLIAFIGLALLFWFRLGS). The 145-residue stretch at 46–190 (ALIGRPAPQT…LRSVLLPQME (145 aa)) folds into the Thioredoxin domain. Cys-92 and Cys-95 are joined by a disulfide.

Belongs to the thioredoxin family. DsbE subfamily.

Its subcellular location is the periplasm. Its function is as follows. Required for disulfide bond formation in some periplasmic proteins. Also acts as a disulfide oxidoreductase in cytochromes c biogenesis. The cysteines of apocytochromes c must be in the reduced state for covalent linkage between the two moieties to occur. The sequence is that of Thiol:disulfide interchange protein CycY (cycY) from Bradyrhizobium diazoefficiens (strain JCM 10833 / BCRC 13528 / IAM 13628 / NBRC 14792 / USDA 110).